Here is a 179-residue protein sequence, read N- to C-terminus: Large ribosomal subunit protein uL6 (179 aa).

This sequence belongs to the universal ribosomal protein uL6 family. As to quaternary structure, part of the 50S ribosomal subunit.

This protein binds to the 23S rRNA, and is important in its secondary structure. It is located near the subunit interface in the base of the L7/L12 stalk, and near the tRNA binding site of the peptidyltransferase center. This chain is Large ribosomal subunit protein uL6, found in Clostridium novyi (strain NT).